The sequence spans 185 residues: Probable RNA 2'-phosphotransferase (185 aa).

The protein belongs to the KptA/TPT1 family.

Its function is as follows. Removes the 2'-phosphate from RNA via an intermediate in which the phosphate is ADP-ribosylated by NAD followed by a presumed transesterification to release the RNA and generate ADP-ribose 1''-2''-cyclic phosphate (APPR&gt;P). May function as an ADP-ribosylase. This is Probable RNA 2'-phosphotransferase from Rhizobium rhizogenes (strain K84 / ATCC BAA-868) (Agrobacterium radiobacter).